Consider the following 260-residue polypeptide: Troponin I 3 (260 aa).

Residues 192 to 219 show a composition bias toward basic and acidic residues; that stretch reads DLDEIMAKKKGTADGKPEWSKKEKKEEE. Positions 192-260 are disordered; it reads DLDEIMAKKK…EEEEEEEEEE (69 aa). The span at 231-260 shows a compositional bias: acidic residues; it reads PEAEPEPEAAEPAAEEPEAEEEEEEEEEEE.

It belongs to the troponin I family. In terms of tissue distribution, expressed in body wall muscle from first larval stage to adult. In adults expression is predominantly in vulval and anal muscles, body wall muscle expression is weaker. Also expressed in vulval muscles of hermaphrodites and the sex muscles of males.

Its function is as follows. Troponin I is the inhibitory subunit of troponin, the thin filament regulatory complex which confers calcium-sensitivity to muscle actomyosin ATPase activity. The protein is Troponin I 3 (tni-3) of Caenorhabditis elegans.